The chain runs to 33 residues: Mu-theraphotoxin-Osp1b (33 aa).

Intrachain disulfides connect Cys2–Cys17, Cys9–Cys22, and Cys16–Cys29.

Belongs to the neurotoxin 10 (Hwtx-1) family. 22 (Htx-4) subfamily. Expressed by the venom gland.

It is found in the secreted. Voltage-gated sodium channel Nav1.7/SCN9A inhibitor. The chain is Mu-theraphotoxin-Osp1b from Orphnaecus sp. (strain Maanghit-Cave/Philippines) (Tarantula spider).